The primary structure comprises 366 residues: Fructose-bisphosphate aldolase 2 (366 aa).

Substrate contacts are provided by R60 and K150. The Proton acceptor role is filled by E191. K233 (schiff-base intermediate with dihydroxyacetone-P) is an active-site residue.

It belongs to the class I fructose-bisphosphate aldolase family.

It carries out the reaction beta-D-fructose 1,6-bisphosphate = D-glyceraldehyde 3-phosphate + dihydroxyacetone phosphate. Its pathway is carbohydrate degradation; glycolysis; D-glyceraldehyde 3-phosphate and glycerone phosphate from D-glucose: step 4/4. This chain is Fructose-bisphosphate aldolase 2 (aldo-2), found in Caenorhabditis elegans.